Here is a 156-residue protein sequence, read N- to C-terminus: Type II secretion system core protein G (156 aa).

Residues 1–22 constitute a propeptide, leader sequence; that stretch reads MQQSQRGCGQNSYGQSGYRQRG. Phe-23 is subject to N-methylphenylalanine. The helical transmembrane segment at 23–43 threads the bilayer; sequence FTLLEIMVVIVILGVLASLVV.

This sequence belongs to the GSP G family. As to quaternary structure, type II secretion system is composed of four main components: the outer membrane complex, the inner membrane complex, the cytoplasmic secretion ATPase and the periplasm-spanning pseudopilus. Forms homomultimers. Post-translationally, cleaved by the prepilin peptidase. In terms of processing, methylated by prepilin peptidase at the amino group of the N-terminal phenylalanine once the leader sequence is cleaved.

It localises to the cell inner membrane. Core component of the type II secretion system required for the energy-dependent secretion of extracellular factors such as proteases and toxins from the periplasm. Pseudopilin (pilin-like) protein that polymerizes to form the pseudopilus. Further polymerization triggers pseudopilus growth. The chain is Type II secretion system core protein G (outG) from Pectobacterium carotovorum subsp. carotovorum (Erwinia carotovora subsp. carotovora).